The chain runs to 154 residues: Putative protein heh-1 (154 aa).

The N-terminal stretch at 1 to 15 is a signal peptide; sequence MKTVIFLALLGLAAA. 2 disulfides stabilise this stretch: Cys39–Cys50 and Cys97–Cys103.

This sequence belongs to the NPC2 family.

The protein resides in the secreted. This Caenorhabditis elegans protein is Putative protein heh-1 (heh-1).